Here is a 497-residue protein sequence, read N- to C-terminus: Peptidoglycan endopeptidase RipA (497 aa).

Residues 1–39 form the signal peptide; sequence MRRTVRALATRVHGRVCAVPLVVGMLLATALYGGGPAAA. The segment covering 177 to 192 has biased composition (basic and acidic residues); the sequence is ARLAKEKADQAARDAE. Disordered stretches follow at residues 177–198 and 253–297; these read ARLA…QDNA and APAA…GQNW. The span at 255–273 shows a compositional bias: pro residues; that stretch reads AAAPAPVPNSAPAPVPGAQ. The region spanning 365–497 is the NlpC/P60 domain; the sequence is REAVEYVIRR…TPYVTRLIEY (133 aa). C408 acts as the Nucleophile in catalysis. The Proton acceptor role is filled by H457. E469 is a catalytic residue.

It belongs to the peptidase C40 family. In terms of assembly, monomer.

The protein localises to the secreted. Peptidoglycan endopeptidase that cleaves the bond between D-glutamate and meso-diaminopimelate. Binds and degrades high-molecular weight peptidoglycan. Required for normal separation of daughter cells after cell division and for cell wall integrity. The sequence is that of Peptidoglycan endopeptidase RipA (ripA) from Mycolicibacterium smegmatis (strain ATCC 700084 / mc(2)155) (Mycobacterium smegmatis).